Reading from the N-terminus, the 139-residue chain is MAMTVHCDIVSAEGEIFSGLVEMVVAHGNLGDLGIAPGHAPLITNLKPGPITLTKQGGDREVFYISGGFLEVQPNMVKVLADTVQRAADLDEAQAQEALKAAENALNAKSSDFDYGAAAARLAEAAAQLRTVQQLRKGK.

This sequence belongs to the ATPase epsilon chain family. As to quaternary structure, F-type ATPases have 2 components, CF(1) - the catalytic core - and CF(0) - the membrane proton channel. CF(1) has five subunits: alpha(3), beta(3), gamma(1), delta(1), epsilon(1). CF(0) has three main subunits: a, b and c.

It is found in the cell inner membrane. Produces ATP from ADP in the presence of a proton gradient across the membrane. This is ATP synthase epsilon chain from Pseudomonas entomophila (strain L48).